Consider the following 259-residue polypeptide: Ribonuclease PH (259 aa).

Residues R88 and 126-128 (GTR) each bind phosphate.

It belongs to the RNase PH family. In terms of assembly, homohexameric ring arranged as a trimer of dimers.

The enzyme catalyses tRNA(n+1) + phosphate = tRNA(n) + a ribonucleoside 5'-diphosphate. Its function is as follows. Phosphorolytic 3'-5' exoribonuclease that plays an important role in tRNA 3'-end maturation. Removes nucleotide residues following the 3'-CCA terminus of tRNAs; can also add nucleotides to the ends of RNA molecules by using nucleoside diphosphates as substrates, but this may not be physiologically important. Probably plays a role in initiation of 16S rRNA degradation (leading to ribosome degradation) during starvation. This Mycobacterium avium (strain 104) protein is Ribonuclease PH.